Consider the following 695-residue polypeptide: DNA ligase (695 aa).

NAD(+) is bound by residues 36-40, 85-86, and Glu-123; these read DADYD and SL. The active-site N6-AMP-lysine intermediate is Lys-125. 4 residues coordinate NAD(+): Arg-146, Glu-182, Lys-318, and Lys-342. Residues Cys-436, Cys-439, Cys-454, and Cys-460 each coordinate Zn(2+). One can recognise a BRCT domain in the interval 617 to 695; the sequence is LQSGDLAGKT…EDGLKALLSQ (79 aa).

It belongs to the NAD-dependent DNA ligase family. LigA subfamily. The cofactor is Mg(2+). Mn(2+) serves as cofactor.

The enzyme catalyses NAD(+) + (deoxyribonucleotide)n-3'-hydroxyl + 5'-phospho-(deoxyribonucleotide)m = (deoxyribonucleotide)n+m + AMP + beta-nicotinamide D-nucleotide.. In terms of biological role, DNA ligase that catalyzes the formation of phosphodiester linkages between 5'-phosphoryl and 3'-hydroxyl groups in double-stranded DNA using NAD as a coenzyme and as the energy source for the reaction. It is essential for DNA replication and repair of damaged DNA. The protein is DNA ligase of Bordetella avium (strain 197N).